We begin with the raw amino-acid sequence, 448 residues long: Glucose-6-phosphate isomerase (448 aa).

E290 (proton donor) is an active-site residue. Residues H311 and K425 contribute to the active site.

Belongs to the GPI family.

The protein resides in the cytoplasm. It carries out the reaction alpha-D-glucose 6-phosphate = beta-D-fructose 6-phosphate. The protein operates within carbohydrate biosynthesis; gluconeogenesis. It functions in the pathway carbohydrate degradation; glycolysis; D-glyceraldehyde 3-phosphate and glycerone phosphate from D-glucose: step 2/4. Its function is as follows. Catalyzes the reversible isomerization of glucose-6-phosphate to fructose-6-phosphate. This chain is Glucose-6-phosphate isomerase, found in Acetivibrio thermocellus (strain ATCC 27405 / DSM 1237 / JCM 9322 / NBRC 103400 / NCIMB 10682 / NRRL B-4536 / VPI 7372) (Clostridium thermocellum).